A 418-amino-acid polypeptide reads, in one-letter code: 3-isopropylmalate dehydratase large subunit (418 aa).

Residues Cys-299, Cys-359, and Cys-362 each coordinate [4Fe-4S] cluster.

It belongs to the aconitase/IPM isomerase family. LeuC type 2 subfamily. As to quaternary structure, heterodimer of LeuC and LeuD. [4Fe-4S] cluster is required as a cofactor.

It carries out the reaction (2R,3S)-3-isopropylmalate = (2S)-2-isopropylmalate. It functions in the pathway amino-acid biosynthesis; L-leucine biosynthesis; L-leucine from 3-methyl-2-oxobutanoate: step 2/4. Functionally, catalyzes the isomerization between 2-isopropylmalate and 3-isopropylmalate, via the formation of 2-isopropylmaleate. This is 3-isopropylmalate dehydratase large subunit from Nitratidesulfovibrio vulgaris (strain DSM 19637 / Miyazaki F) (Desulfovibrio vulgaris).